Consider the following 283-residue polypeptide: NAD kinase (283 aa).

D68 functions as the Proton acceptor in the catalytic mechanism. NAD(+) is bound by residues 68–69, 142–143, R153, D172, 183–188, and Q242; these read DG, ND, and TAYSLS.

Belongs to the NAD kinase family. A divalent metal cation is required as a cofactor.

It is found in the cytoplasm. It carries out the reaction NAD(+) + ATP = ADP + NADP(+) + H(+). Involved in the regulation of the intracellular balance of NAD and NADP, and is a key enzyme in the biosynthesis of NADP. Catalyzes specifically the phosphorylation on 2'-hydroxyl of the adenosine moiety of NAD to yield NADP. The polypeptide is NAD kinase (Thermoanaerobacter pseudethanolicus (strain ATCC 33223 / 39E) (Clostridium thermohydrosulfuricum)).